The following is a 321-amino-acid chain: 5,10-methylenetetrahydromethanopterin reductase (321 aa).

The protein belongs to the mer family. In terms of assembly, homotetramer.

It localises to the cytoplasm. It catalyses the reaction 5-methyl-5,6,7,8-tetrahydromethanopterin + oxidized coenzyme F420-(gamma-L-Glu)(n) + H(+) = 5,10-methylenetetrahydromethanopterin + reduced coenzyme F420-(gamma-L-Glu)(n). Its pathway is one-carbon metabolism; methanogenesis from CO(2); methyl-coenzyme M from 5,10-methylene-5,6,7,8-tetrahydromethanopterin: step 1/2. Catalyzes the reversible reduction of methylene-H(4)MPT to methyl-H(4)MPT. The protein is 5,10-methylenetetrahydromethanopterin reductase of Methanothermobacter marburgensis (strain ATCC BAA-927 / DSM 2133 / JCM 14651 / NBRC 100331 / OCM 82 / Marburg) (Methanobacterium thermoautotrophicum).